Here is a 617-residue protein sequence, read N- to C-terminus: Dihydroxy-acid dehydratase (617 aa).

Residue aspartate 82 coordinates Mg(2+). Residue cysteine 123 coordinates [2Fe-2S] cluster. The Mg(2+) site is built by aspartate 124 and lysine 125. At lysine 125 the chain carries N6-carboxylysine. Cysteine 197 contacts [2Fe-2S] cluster. Position 497 (glutamate 497) interacts with Mg(2+). Serine 523 (proton acceptor) is an active-site residue.

It belongs to the IlvD/Edd family. Homodimer. It depends on [2Fe-2S] cluster as a cofactor. Mg(2+) serves as cofactor.

It carries out the reaction (2R)-2,3-dihydroxy-3-methylbutanoate = 3-methyl-2-oxobutanoate + H2O. It catalyses the reaction (2R,3R)-2,3-dihydroxy-3-methylpentanoate = (S)-3-methyl-2-oxopentanoate + H2O. Its pathway is amino-acid biosynthesis; L-isoleucine biosynthesis; L-isoleucine from 2-oxobutanoate: step 3/4. It functions in the pathway amino-acid biosynthesis; L-valine biosynthesis; L-valine from pyruvate: step 3/4. Functionally, functions in the biosynthesis of branched-chain amino acids. Catalyzes the dehydration of (2R,3R)-2,3-dihydroxy-3-methylpentanoate (2,3-dihydroxy-3-methylvalerate) into 2-oxo-3-methylpentanoate (2-oxo-3-methylvalerate) and of (2R)-2,3-dihydroxy-3-methylbutanoate (2,3-dihydroxyisovalerate) into 2-oxo-3-methylbutanoate (2-oxoisovalerate), the penultimate precursor to L-isoleucine and L-valine, respectively. This Streptomyces coelicolor (strain ATCC BAA-471 / A3(2) / M145) protein is Dihydroxy-acid dehydratase.